A 359-amino-acid chain; its full sequence is AA9 family lytic polysaccharide monooxygenase C (359 aa).

A signal peptide spans 1-16 (MKTGSILAALVASASA). His-17 and His-99 together coordinate Cu(2+). 2 disulfides stabilise this stretch: Cys-55–Cys-185 and Cys-155–Cys-243. O2 contacts are provided by His-171 and Gln-180. A Cu(2+)-binding site is contributed by Tyr-182. N-linked (GlcNAc...) asparagine glycosylation is found at Asn-189 and Asn-284. The disordered stretch occupies residues 244–320 (PAGGSGGSSP…NPQPTNGGNS (77 aa)). Residues 251–296 (SSPAPATTASTPKPTSASAPKPVSTTASTPKPTNGSGSGTGAAHST) are compositionally biased toward low complexity. A compositionally biased stretch (polar residues) spans 307 to 319 (TKASNPQPTNGGN). One can recognise a CBM1 domain in the interval 323–358 (RAAALYGQCGGKGWTGPTSCASGTCKFSNDWYSQCL).

It belongs to the polysaccharide monooxygenase AA9 family. Requires Cu(2+) as cofactor.

The protein resides in the secreted. The catalysed reaction is [(1-&gt;4)-beta-D-glucosyl]n+m + reduced acceptor + O2 = 4-dehydro-beta-D-glucosyl-[(1-&gt;4)-beta-D-glucosyl]n-1 + [(1-&gt;4)-beta-D-glucosyl]m + acceptor + H2O.. Activity in inhibited by excessive amounts of H(2)O(2). Functionally, lytic polysaccharide monooxygenase (LPMO) that depolymerizes crystalline and amorphous polysaccharides via the oxidation of scissile alpha- or beta-(1-4)-glycosidic bonds, yielding C4 oxidation products. Catalysis by LPMOs requires the reduction of the active-site copper from Cu(II) to Cu(I) by a reducing agent and H(2)O(2) or O(2) as a cosubstrate. Degrades various hemicelluloses, in particular xyloglucan. Active on tamarind xyloglucan and konjac glucomannan. Acts on the glucose backbone of xyloglucan, accepting various substitutions (xylose, galactose) in almost allpositions. In contrast to all previously characterized LPMOs, which are active only on polysaccharides, is able to cleave soluble cello-oligosaccharides as short as a tetramer. The cello-oligosaccharide products released by this enzyme contain a C4 gemdiol/keto group at the non-reducing end. Binds to the inner wood cell wall layer and consumes enzymatically generated H(2)O(2). The protein is AA9 family lytic polysaccharide monooxygenase C (gh61-3) of Neurospora crassa (strain ATCC 24698 / 74-OR23-1A / CBS 708.71 / DSM 1257 / FGSC 987).